We begin with the raw amino-acid sequence, 347 residues long: Heat-inducible transcription repressor HrcA (347 aa).

Belongs to the HrcA family.

Functionally, negative regulator of class I heat shock genes (grpE-dnaK-dnaJ and groELS operons). Prevents heat-shock induction of these operons. This is Heat-inducible transcription repressor HrcA from Nocardia farcinica (strain IFM 10152).